Reading from the N-terminus, the 562-residue chain is Chaperonin GroEL 1 (562 aa).

Residues 30–33 (TLGP), lysine 51, 87–91 (DGTTT), glycine 415, 478–480 (NAA), and aspartate 494 contribute to the ATP site.

This sequence belongs to the chaperonin (HSP60) family. Forms a cylinder of 14 subunits composed of two heptameric rings stacked back-to-back. Interacts with the co-chaperonin GroES.

It localises to the cytoplasm. It carries out the reaction ATP + H2O + a folded polypeptide = ADP + phosphate + an unfolded polypeptide.. Its function is as follows. Together with its co-chaperonin GroES, plays an essential role in assisting protein folding. The GroEL-GroES system forms a nano-cage that allows encapsulation of the non-native substrate proteins and provides a physical environment optimized to promote and accelerate protein folding. This chain is Chaperonin GroEL 1, found in Sorangium cellulosum (strain So ce56) (Polyangium cellulosum (strain So ce56)).